The sequence spans 648 residues: Beta-glucuronidase (648 aa).

An N-terminal signal peptide occupies residues 1-19 (GLAMAWAVLGPLLWGCALA). N-linked (GlcNAc...) asparagine glycosylation is found at asparagine 170, asparagine 269, and asparagine 417. Residue glutamate 448 is the Proton donor of the active site. Asparagine 628 is a glycosylation site (N-linked (GlcNAc...) asparagine).

It belongs to the glycosyl hydrolase 2 family. As to quaternary structure, homotetramer.

Its subcellular location is the lysosome. The enzyme catalyses a beta-D-glucuronoside + H2O = D-glucuronate + an alcohol. Inhibited by L-aspartic acid. Functionally, plays an important role in the degradation of dermatan and keratan sulfates. The polypeptide is Beta-glucuronidase (GUSB) (Chlorocebus aethiops (Green monkey)).